The sequence spans 338 residues: N-acetylmuramate/N-acetylglucosamine kinase (338 aa).

It belongs to the kinase AmgK family.

It catalyses the reaction N-acetyl-D-muramate + ATP = N-acetyl-alpha-D-muramate 1-phosphate + ADP + H(+). It carries out the reaction N-acetyl-D-glucosamine + ATP = N-acetyl-alpha-D-glucosamine 1-phosphate + ADP + H(+). It participates in cell wall biogenesis; peptidoglycan recycling. Its function is as follows. Sugar kinase that catalyzes the ATP-dependent phosphorylation of N-acetylmuramate (MurNAc) and N-acetylglucosamine (GlcNAc) at its C1 hydroxyl group, leading to MurNAc alpha-1P and GlcNAc alpha-1P, respectively. Is involved in peptidoglycan recycling as part of a cell wall recycling pathway that bypasses de novo biosynthesis of the peptidoglycan precursor UDP-MurNAc. Plays a role in intrinsic resistance to fosfomycin, which targets the de novo synthesis of UDP-MurNAc. This chain is N-acetylmuramate/N-acetylglucosamine kinase, found in Pseudomonas aeruginosa (strain ATCC 15692 / DSM 22644 / CIP 104116 / JCM 14847 / LMG 12228 / 1C / PRS 101 / PAO1).